Reading from the N-terminus, the 319-residue chain is Peroxidase 13 (319 aa).

A signal peptide spans 1 to 22; it reads MITIALFLVLLYFHDQLGYSAA. Cystine bridges form between C33–C111, C66–C71, C117–C315, and C196–C222. H64 acts as the Proton acceptor in catalysis. The Ca(2+) site is built by D65, V68, G70, D72, and S74. Residue P158 participates in substrate binding. H189 lines the heme b pocket. Residue T190 participates in Ca(2+) binding. The Ca(2+) site is built by D235, S238, and D243. N280 carries an N-linked (GlcNAc...) asparagine glycan.

This sequence belongs to the peroxidase family. Classical plant (class III) peroxidase subfamily. Heme b is required as a cofactor. It depends on Ca(2+) as a cofactor.

It is found in the secreted. The catalysed reaction is 2 a phenolic donor + H2O2 = 2 a phenolic radical donor + 2 H2O. Removal of H(2)O(2), oxidation of toxic reductants, biosynthesis and degradation of lignin, suberization, auxin catabolism, response to environmental stresses such as wounding, pathogen attack and oxidative stress. These functions might be dependent on each isozyme/isoform in each plant tissue. The chain is Peroxidase 13 (PER13) from Arabidopsis thaliana (Mouse-ear cress).